The primary structure comprises 299 residues: MSTFSASDFNSERYSSSRPSYPSDFYKMIDEYHDGERKLLVDVGCGPGTATLQMAQELKPFEQIIGSDLSATMIKTAEVIKEGSPDTYKNVSFKISSSDDFKFLGADSVDKQKIDMITAVECAHWFDFEKFQRSAYANLRKDGTIAIWGYADPIFPDYPEFDDLMIEVPYGKQGLGPYWEQPGRSRLRNMLKDSHLDPELFHDIQVSYFCAEDVRDKVKLHQHTKKPLLIRKQVTLMEFADYVRTWSAYHQWKQDPKNKDKEDVADWFIKESLRRRPELSTNTKIEVVWNTFYKLGKRV.

At S2 the chain carries N-acetylserine.

Belongs to the methyltransferase superfamily. Tam family.

The protein resides in the cytoplasm. It carries out the reaction trans-aconitate + S-adenosyl-L-methionine = (E)-2-(methoxycarbonylmethyl)but-2-enedioate + S-adenosyl-L-homocysteine. Catalyzes the S-adenosylmethionine monomethyl esterification of trans-aconitate and 3-isopropylmalate at high affinity and of other molecules like cis-aconitate, isocitrate, and citrate at lower velocities and affinities. The function of trans-aconitate methylation appears to be in reducing the toxicity of this spontaneous breakdown product of cis-aconitate. The role of 3-isopropylmalate methylation is unclear but may represent a metabolic branch at 3-isopropylmalate, where some of the material is taken in the pathway leading to leucine and some is taken in a pathway to the 3-isopropylmalate methyl ester, a molecule that provides a signal to switch from vegetative to invasive growth in response to amino acid starvation. This Saccharomyces cerevisiae (strain YJM789) (Baker's yeast) protein is Trans-aconitate 3-methyltransferase (TMT1).